The chain runs to 220 residues: Deoxyribose-phosphate aldolase 2 (220 aa).

The Proton donor/acceptor role is filled by Asp-89. Lys-151 functions as the Schiff-base intermediate with acetaldehyde in the catalytic mechanism. Lys-180 serves as the catalytic Proton donor/acceptor.

It belongs to the DeoC/FbaB aldolase family. DeoC type 1 subfamily.

It localises to the cytoplasm. It carries out the reaction 2-deoxy-D-ribose 5-phosphate = D-glyceraldehyde 3-phosphate + acetaldehyde. The protein operates within carbohydrate degradation; 2-deoxy-D-ribose 1-phosphate degradation; D-glyceraldehyde 3-phosphate and acetaldehyde from 2-deoxy-alpha-D-ribose 1-phosphate: step 2/2. Its function is as follows. Catalyzes a reversible aldol reaction between acetaldehyde and D-glyceraldehyde 3-phosphate to generate 2-deoxy-D-ribose 5-phosphate. The polypeptide is Deoxyribose-phosphate aldolase 2 (Staphylococcus aureus (strain COL)).